A 151-amino-acid chain; its full sequence is Ribosome maturation factor RimP (151 aa).

The protein belongs to the RimP family.

The protein resides in the cytoplasm. Required for maturation of 30S ribosomal subunits. This Aliivibrio fischeri (strain ATCC 700601 / ES114) (Vibrio fischeri) protein is Ribosome maturation factor RimP.